Reading from the N-terminus, the 333-residue chain is Probable G-protein coupled receptor 33 (333 aa).

The Extracellular segment spans residues 1-30 (MDLINSTDYLINASTLVRNSTQFLAPASKM). N5, N12, and N19 each carry an N-linked (GlcNAc...) asparagine glycan. A helical transmembrane segment spans residues 31–53 (IIALSLYISSIIGTITNGLYLWV). At 54–64 (LRFKMKQTVNT) the chain is on the cytoplasmic side. Residues 65-86 (LLFFHLILSYFISTMILPFMAT) form a helical membrane-spanning segment. The Extracellular portion of the chain corresponds to 87 to 103 (SQLQDNHWNFGTALCKV). C101 and C179 form a disulfide bridge. A helical transmembrane segment spans residues 104 to 124 (FNGTLSLGMFTSVFFLSAIGL). The Cytoplasmic portion of the chain corresponds to 125–143 (DRYLLTLHPVWSQQHRTPR). Residues 144–165 (WASSIVLGVWISAAALSIPYLI) traverse the membrane as a helical segment. Residues 166–209 (FRQTHHDRKGKVTCQNNYAVSTNWESKEMQALRQWIHVACFISR) are Extracellular-facing. A helical membrane pass occupies residues 210–230 (FLLGFLLPFFIIIFCYERVAS). The Cytoplasmic portion of the chain corresponds to 231–246 (KVKERSLFKSSKPFKV). The chain crosses the membrane as a helical span at residues 247–268 (MMTAIISFFVCWMPYHIHQGLL). At 269–283 (LTMNQSLLLELTLIL) the chain is on the extracellular side. N272 carries an N-linked (GlcNAc...) asparagine glycan. A helical transmembrane segment spans residues 284-303 (TVLTTSFNTIFSPTLYLFVG). Residues 304–333 (ENFKKVFKKSILALFESTFSEDSSVERTQT) are Cytoplasmic-facing.

The protein belongs to the G-protein coupled receptor 1 family.

The protein resides in the cell membrane. Functionally, orphan receptor; could be a chemoattractant receptor. The sequence is that of Probable G-protein coupled receptor 33 (GPR33) from Pan paniscus (Pygmy chimpanzee).